The following is a 306-amino-acid chain: Apolipoprotein E (306 aa).

The signal sequence occupies residues Met1–Ala18. A run of 8 repeats spans residues Val81–Gly102, Pro103–Gly124, Ala125–Gly146, Gln147–Leu168, Arg169–Glu190, Arg191–Ala212, Gln213–Arg230, and Gly231–Glu252. Residues Val81–Glu252 form an 8 X 22 AA approximate tandem repeats region. The residue at position 144 (Met144) is a Methionine sulfoxide. Ser148 is modified (phosphoserine). An LDL and other lipoprotein receptors binding region spans residues His159–Arg169. Leu163–Arg166 contributes to the heparin binding site. The segment at Ala211–Met280 is lipid-binding and lipoprotein association. Gly226–Leu233 provides a ligand contact to heparin. The interval Arg268 to Met280 is specificity for association with VLDL.

It belongs to the apolipoprotein A1/A4/E family. As to quaternary structure, homotetramer. May interact with ABCA1; functionally associated with ABCA1 in the biogenesis of HDLs. May interact with APP/A4 amyloid-beta peptide; the interaction is extremely stable in vitro but its physiological significance is unclear. May interact with MAPT. May interact with MAP2. In the cerebrospinal fluid, interacts with secreted SORL1. Interacts with PMEL; this allows the loading of PMEL luminal fragment on ILVs to induce fibril nucleation. APOE exists as multiple glycosylated and sialylated glycoforms within cells and in plasma. The extent of glycosylation and sialylation are tissue and context specific. Post-translationally, glycated in plasma VLDL. In terms of processing, phosphorylated by FAM20C in the extracellular medium.

Its subcellular location is the secreted. It localises to the extracellular space. The protein localises to the extracellular matrix. The protein resides in the extracellular vesicle. It is found in the endosome. Its subcellular location is the multivesicular body. APOE is an apolipoprotein, a protein associating with lipid particles, that mainly functions in lipoprotein-mediated lipid transport between organs via the plasma and interstitial fluids. APOE is a core component of plasma lipoproteins and is involved in their production, conversion and clearance. Apolipoproteins are amphipathic molecules that interact both with lipids of the lipoprotein particle core and the aqueous environment of the plasma. As such, APOE associates with chylomicrons, chylomicron remnants, very low density lipoproteins (VLDL) and intermediate density lipoproteins (IDL) but shows a preferential binding to high-density lipoproteins (HDL). It also binds a wide range of cellular receptors including the LDL receptor/LDLR, the LDL receptor-related proteins LRP1, LRP2 and LRP8 and the very low-density lipoprotein receptor/VLDLR that mediate the cellular uptake of the APOE-containing lipoprotein particles. Finally, APOE also has a heparin-binding activity and binds heparan-sulfate proteoglycans on the surface of cells, a property that supports the capture and the receptor-mediated uptake of APOE-containing lipoproteins by cells. A main function of APOE is to mediate lipoprotein clearance through the uptake of chylomicrons, VLDLs, and HDLs by hepatocytes. APOE is also involved in the biosynthesis by the liver of VLDLs as well as their uptake by peripheral tissues ensuring the delivery of triglycerides and energy storage in muscle, heart and adipose tissues. By participating in the lipoprotein-mediated distribution of lipids among tissues, APOE plays a critical role in plasma and tissues lipid homeostasis. APOE is also involved in two steps of reverse cholesterol transport, the HDLs-mediated transport of cholesterol from peripheral tissues to the liver, and thereby plays an important role in cholesterol homeostasis. First, it is functionally associated with ABCA1 in the biogenesis of HDLs in tissues. Second, it is enriched in circulating HDLs and mediates their uptake by hepatocytes. APOE also plays an important role in lipid transport in the central nervous system, regulating neuron survival and sprouting. The chain is Apolipoprotein E (APOE) from Hystrix brachyura (Malayan porcupine).